Consider the following 220-residue polypeptide: 26S proteasome non-ATPase regulatory subunit 9 (220 aa).

Coiled coils occupy residues 4-32 (GTTT…GQIL) and 61-91 (RLAR…YHSE). In terms of domain architecture, PDZ spans 102 to 200 (RASALDLDSD…QLDLILVPKT (99 aa)).

It belongs to the proteasome subunit p27 family. As to quaternary structure, interacts with PI31; this interaction is increased by PI31 ADP-ribosylation. Interacts with Rpt5.

Its function is as follows. Acts as a chaperone during the assembly of the 26S proteasome, specifically of the base subcomplex of the PA700/19S regulatory complex (RC). This Drosophila melanogaster (Fruit fly) protein is 26S proteasome non-ATPase regulatory subunit 9.